A 235-amino-acid polypeptide reads, in one-letter code: Orotidine 5'-phosphate decarboxylase (235 aa).

Residues D10, K33, D60 to T69, T123, R185, Q194, G214, and R215 contribute to the substrate site. The Proton donor role is filled by K62.

Belongs to the OMP decarboxylase family. Type 1 subfamily. In terms of assembly, homodimer.

The enzyme catalyses orotidine 5'-phosphate + H(+) = UMP + CO2. The protein operates within pyrimidine metabolism; UMP biosynthesis via de novo pathway; UMP from orotate: step 2/2. In terms of biological role, catalyzes the decarboxylation of orotidine 5'-monophosphate (OMP) to uridine 5'-monophosphate (UMP). The protein is Orotidine 5'-phosphate decarboxylase of Lactobacillus johnsonii (strain CNCM I-12250 / La1 / NCC 533).